The primary structure comprises 79 residues: MSLEVFEKLEAKVQQAIDTITLLQMEIEELKEKNNSLTQEVQSAQHQREELERENNFLKEQQSGWQERLQALLGRMEEV.

Positions 3–79 form a coiled coil; that stretch reads LEVFEKLEAK…QALLGRMEEV (77 aa).

It belongs to the ZapB family. As to quaternary structure, homodimer. The ends of the coiled-coil dimer bind to each other, forming polymers. Interacts with FtsZ.

The protein resides in the cytoplasm. In terms of biological role, non-essential, abundant cell division factor that is required for proper Z-ring formation. It is recruited early to the divisome by direct interaction with FtsZ, stimulating Z-ring assembly and thereby promoting cell division earlier in the cell cycle. Its recruitment to the Z-ring requires functional FtsA or ZipA. In Salmonella typhi, this protein is Cell division protein ZapB.